The following is a 461-amino-acid chain: Pup--protein ligase (461 aa).

Glu-9 provides a ligand contact to Mg(2+). Arg-53 serves as a coordination point for ATP. Residue Tyr-55 coordinates Mg(2+). The active-site Proton acceptor is the Asp-57. Residue Glu-63 coordinates Mg(2+). The ATP site is built by Thr-66 and Trp-420.

Belongs to the Pup ligase/Pup deamidase family. Pup-conjugating enzyme subfamily.

The catalysed reaction is ATP + [prokaryotic ubiquitin-like protein]-L-glutamate + [protein]-L-lysine = ADP + phosphate + N(6)-([prokaryotic ubiquitin-like protein]-gamma-L-glutamyl)-[protein]-L-lysine.. The protein operates within protein degradation; proteasomal Pup-dependent pathway. It participates in protein modification; protein pupylation. Its function is as follows. Catalyzes the covalent attachment of the prokaryotic ubiquitin-like protein modifier Pup to the proteasomal substrate proteins, thereby targeting them for proteasomal degradation. This tagging system is termed pupylation. The ligation reaction involves the side-chain carboxylate of the C-terminal glutamate of Pup and the side-chain amino group of a substrate lysine. This is Pup--protein ligase from Renibacterium salmoninarum (strain ATCC 33209 / DSM 20767 / JCM 11484 / NBRC 15589 / NCIMB 2235).